The primary structure comprises 132 residues: MKVVYYSFSGNVRRFISRAGIKDTFEITQDNCNESVNEPYILVTGTIGFGEVPQPVQSFLNVNHTQLQAVAASGNRNWGQNFAKAGHTISEEYKVPLMMKFEVQGTNKDIIEFKDKVGNFNENHGRKEIQSY.

The protein belongs to the NrdI family.

Functionally, probably involved in ribonucleotide reductase function. The chain is Protein NrdI from Staphylococcus epidermidis (strain ATCC 35984 / DSM 28319 / BCRC 17069 / CCUG 31568 / BM 3577 / RP62A).